The sequence spans 432 residues: Glutamyl-tRNA reductase (432 aa).

Substrate contacts are provided by residues Thr-55–Arg-58, Ser-113, Glu-118–Gln-120, and Gln-124. The active-site Nucleophile is Cys-56. Gly-193 to Ile-198 serves as a coordination point for NADP(+).

It belongs to the glutamyl-tRNA reductase family. Homodimer.

The catalysed reaction is (S)-4-amino-5-oxopentanoate + tRNA(Glu) + NADP(+) = L-glutamyl-tRNA(Glu) + NADPH + H(+). It functions in the pathway porphyrin-containing compound metabolism; protoporphyrin-IX biosynthesis; 5-aminolevulinate from L-glutamyl-tRNA(Glu): step 1/2. Catalyzes the NADPH-dependent reduction of glutamyl-tRNA(Glu) to glutamate 1-semialdehyde (GSA). In Paracidovorax citrulli (strain AAC00-1) (Acidovorax citrulli), this protein is Glutamyl-tRNA reductase.